A 599-amino-acid chain; its full sequence is Nucleosomal histone kinase 1 (599 aa).

Positions 47-328 (WRIGPSIGVG…PDYDKCRSWF (282 aa)) constitute a Protein kinase domain. ATP-binding positions include 53–61 (IGVGGFGEI) and Lys-77. Asp-183 (proton acceptor) is an active-site residue. Disordered stretches follow at residues 340 to 507 (NGDL…PQPR) and 532 to 599 (RKKK…KYQG). Residues 349–361 (PQTSSNNNLSPPG) are compositionally biased toward polar residues. A phosphoserine mark is found at Ser-376, Ser-381, Ser-382, Ser-388, and Ser-390. Residues 435 to 448 (VKTEPKSTPRERAT) are compositionally biased toward basic and acidic residues. Ser-483 bears the Phosphoserine mark. Positions 546–558 (SRTPSSRSALASS) are enriched in low complexity. 2 positions are modified to phosphoserine: Ser-564 and Ser-586. At Thr-589 the chain carries Phosphothreonine.

Belongs to the protein kinase superfamily. CK1 Ser/Thr protein kinase family. VRK subfamily. As to quaternary structure, may interact with Unc-89 (via protein kinase domain 1). Interacts with L(2)gl. The cofactor is Mg(2+). In terms of processing, phosphorylated during mitosis and female meiosis. In terms of tissue distribution, expressed in ovaries (at protein level). Expressed in indirect flight muscle (IFM) (at protein level).

It localises to the cytoplasm. The protein resides in the nucleus. Its subcellular location is the chromosome. It is found in the myofibril. The protein localises to the sarcomere. It localises to the z line. The protein resides in the m line. The enzyme catalyses L-seryl-[protein] + ATP = O-phospho-L-seryl-[protein] + ADP + H(+). The catalysed reaction is L-threonyl-[protein] + ATP = O-phospho-L-threonyl-[protein] + ADP + H(+). Serine/threonine-protein kinase involved in somatic mitosis and female meiosis. Required for spindle organization in mitosis, and for the establishment or maintenance of meiosis-specific chromosomal configurations, including the prophase I karyosome and the metaphase I spindle. Specifically phosphorylates nucleosomal H2A on 'Thr-119'. Required for the development and organization of indirect flight muscle sarcomeres by regulating the formation of M line and H zone and the correct assembly of thick and thin filaments in the sarcomere. The protein is Nucleosomal histone kinase 1 (ball) of Drosophila melanogaster (Fruit fly).